A 637-amino-acid polypeptide reads, in one-letter code: Early transcription factor 70 kDa subunit (637 aa).

The Helicase ATP-binding domain maps to 32–185 (RTIIDENRSV…GHIIDLMSEE (154 aa)). 45-52 (HIMGSGKT) contacts ATP. The short motif at 135–138 (DEAH) is the DEXH box element. Positions 327–507 (KFKYFINRIQ…VLPFDIKKLL (181 aa)) constitute a Helicase C-terminal domain.

This sequence belongs to the helicase family. VETF subfamily. Heterodimer of a 70 kDa and a 82 kDa subunit. Part of the early transcription complex composed of ETF, RAP94/OPG109, and the DNA-directed RNA polymerase.

Its subcellular location is the virion. Functionally, acts with RNA polymerase to initiate transcription from early gene promoters. Is recruited by the RPO-associated protein of 94 kDa RAP94/OPG109 to form the early transcription complex, which also contains the core RNA polymerase. ETF heterodimer binds to early gene promoters. The chain is Early transcription factor 70 kDa subunit (OPG118) from Homo sapiens (Human).